An 86-amino-acid polypeptide reads, in one-letter code: NAD(P)H-quinone oxidoreductase subunit O (86 aa).

This sequence belongs to the complex I NdhO subunit family. As to quaternary structure, NDH-1 can be composed of about 15 different subunits; different subcomplexes with different compositions have been identified which probably have different functions.

Its subcellular location is the cellular thylakoid membrane. The catalysed reaction is a plastoquinone + NADH + (n+1) H(+)(in) = a plastoquinol + NAD(+) + n H(+)(out). It catalyses the reaction a plastoquinone + NADPH + (n+1) H(+)(in) = a plastoquinol + NADP(+) + n H(+)(out). Functionally, NDH-1 shuttles electrons from an unknown electron donor, via FMN and iron-sulfur (Fe-S) centers, to quinones in the respiratory and/or the photosynthetic chain. The immediate electron acceptor for the enzyme in this species is believed to be plastoquinone. Couples the redox reaction to proton translocation, and thus conserves the redox energy in a proton gradient. Cyanobacterial NDH-1 also plays a role in inorganic carbon-concentration. The protein is NAD(P)H-quinone oxidoreductase subunit O of Prochlorococcus marinus (strain SARG / CCMP1375 / SS120).